Here is a 299-residue protein sequence, read N- to C-terminus: Acetylglutamate kinase (299 aa).

Substrate contacts are provided by residues 68–69, R90, and N195; that span reads GG.

The protein belongs to the acetylglutamate kinase family. ArgB subfamily.

It localises to the cytoplasm. It catalyses the reaction N-acetyl-L-glutamate + ATP = N-acetyl-L-glutamyl 5-phosphate + ADP. It participates in amino-acid biosynthesis; L-arginine biosynthesis; N(2)-acetyl-L-ornithine from L-glutamate: step 2/4. Its function is as follows. Catalyzes the ATP-dependent phosphorylation of N-acetyl-L-glutamate. In Erythrobacter litoralis (strain HTCC2594), this protein is Acetylglutamate kinase.